A 202-amino-acid chain; its full sequence is 3-isopropylmalate dehydratase small subunit (202 aa).

It belongs to the LeuD family. LeuD type 1 subfamily. As to quaternary structure, heterodimer of LeuC and LeuD.

It carries out the reaction (2R,3S)-3-isopropylmalate = (2S)-2-isopropylmalate. It functions in the pathway amino-acid biosynthesis; L-leucine biosynthesis; L-leucine from 3-methyl-2-oxobutanoate: step 2/4. Catalyzes the isomerization between 2-isopropylmalate and 3-isopropylmalate, via the formation of 2-isopropylmaleate. The sequence is that of 3-isopropylmalate dehydratase small subunit from Nocardioides sp. (strain ATCC BAA-499 / JS614).